A 359-amino-acid polypeptide reads, in one-letter code: Peptide chain release factor 1 (359 aa).

Gln-235 carries the post-translational modification N5-methylglutamine. The disordered stretch occupies residues 285–305; the sequence is KRDSEISQMRKSQIGSGDRSE. The segment covering 290–299 has biased composition (polar residues); the sequence is ISQMRKSQIG.

The protein belongs to the prokaryotic/mitochondrial release factor family. In terms of processing, methylated by PrmC. Methylation increases the termination efficiency of RF1.

The protein resides in the cytoplasm. In terms of biological role, peptide chain release factor 1 directs the termination of translation in response to the peptide chain termination codons UAG and UAA. This chain is Peptide chain release factor 1, found in Ehrlichia canis (strain Jake).